A 104-amino-acid polypeptide reads, in one-letter code: Large ribosomal subunit protein uL24 (104 aa).

Belongs to the universal ribosomal protein uL24 family. In terms of assembly, part of the 50S ribosomal subunit.

Functionally, one of two assembly initiator proteins, it binds directly to the 5'-end of the 23S rRNA, where it nucleates assembly of the 50S subunit. One of the proteins that surrounds the polypeptide exit tunnel on the outside of the subunit. This Rhodopseudomonas palustris (strain BisA53) protein is Large ribosomal subunit protein uL24.